The following is a 349-amino-acid chain: Methylthioribose-1-phosphate isomerase (349 aa).

Substrate contacts are provided by residues 51–53 (RGA), R94, and Q199. D240 serves as the catalytic Proton donor. 250–251 (NK) is a binding site for substrate.

Belongs to the eIF-2B alpha/beta/delta subunits family. MtnA subfamily. As to quaternary structure, homodimer.

The enzyme catalyses 5-(methylsulfanyl)-alpha-D-ribose 1-phosphate = 5-(methylsulfanyl)-D-ribulose 1-phosphate. It functions in the pathway amino-acid biosynthesis; L-methionine biosynthesis via salvage pathway; L-methionine from S-methyl-5-thio-alpha-D-ribose 1-phosphate: step 1/6. Its function is as follows. Catalyzes the interconversion of methylthioribose-1-phosphate (MTR-1-P) into methylthioribulose-1-phosphate (MTRu-1-P). The polypeptide is Methylthioribose-1-phosphate isomerase (Bacillus cytotoxicus (strain DSM 22905 / CIP 110041 / 391-98 / NVH 391-98)).